Here is a 194-residue protein sequence, read N- to C-terminus: Imidazoleglycerol-phosphate dehydratase (194 aa).

This sequence belongs to the imidazoleglycerol-phosphate dehydratase family.

The protein resides in the cytoplasm. It catalyses the reaction D-erythro-1-(imidazol-4-yl)glycerol 3-phosphate = 3-(imidazol-4-yl)-2-oxopropyl phosphate + H2O. It participates in amino-acid biosynthesis; L-histidine biosynthesis; L-histidine from 5-phospho-alpha-D-ribose 1-diphosphate: step 6/9. The polypeptide is Imidazoleglycerol-phosphate dehydratase (Thermoanaerobacter sp. (strain X514)).